The primary structure comprises 542 residues: MWTTTSGLSGRSLRLSITFAAVVGFSLFGYNQGMMAGLLNGDEFVNSFPILKMPDNPTAGEKHYIDVIRGAVTSCYELGCFFGALFSMFCGNRLGRTRLIFMGASILIVGALLTTVCYTGKWEVGQFVIGRVVSGIGNGMNTATIPVWQSECSGAHNRGFLVCFEGAMIAGGTFIAYWVVFGISHAADSVQWRFPVALQIFFALVVATGALMLPDSPSWFVSRGLDNEACEVLGKIKGTSPDSDQVLHDFNLIKTDMESTKSEQSNWKTVFTFGKTQEFQRLLIGCSGQFFQQFTGCNAAIYYSTLLFQENLHMEKYLSLIMGGVFASVYALATIPSFFMIERVGRRKLYLIGFLGQGLSFVITFACLIKETEENSKGAAVGIFLFITFFAFTLLPLPWIYPPEINPLRTRTVGASASTCTNWMCNFAVVMFTPLFAGQSPWGVYLFFALFNFVGLIFGYFFYVETAGRELEEVDIIYAKAHVEGKMPFRVAHDLPKLSFEEIVQQSRELGLDTNDHVMLEKKELGLSSDSAQETEEVYEKQ.

Transmembrane regions (helical) follow at residues 19–39 (FAAV…AGLL), 70–90 (GAVT…SMFC), 99–119 (LIFM…VCYT), 127–149 (FVIG…PVWQ), 160–180 (FLVC…YWVV), 194–214 (FPVA…LMLP), 321–341 (IMGG…FFMI), 349–369 (LYLI…ACLI), 380–400 (AVGI…LPWI), 413–432 (VGAS…VVMF), and 444–464 (VYLF…FFYV).

This sequence belongs to the major facilitator superfamily. Sugar transporter (TC 2.A.1.1) family.

The protein resides in the membrane. Its function is as follows. Major facilitator superfamily transporter that may be involved in A.fumigatus adaptation to azoles such as vorizonazole. This Aspergillus fumigatus (strain ATCC MYA-4609 / CBS 101355 / FGSC A1100 / Af293) (Neosartorya fumigata) protein is Major facilitator superfamily transporter mfsA.